Reading from the N-terminus, the 222-residue chain is Transmembrane protein 114 (222 aa).

Residues 7–27 form a helical membrane-spanning segment; sequence ALAGAAALSGALSFVLLAAAI. Residues Asn-54 and Asn-88 are each glycosylated (N-linked (GlcNAc...) asparagine). A run of 3 helical transmembrane segments spans residues 105 to 125, 133 to 153, and 188 to 208; these read FVILLPLSLIVMVFGGMTGFL, LLLLLTGILFLFGAMVTLTGI, and LALGWISFVSELLTGVVFLAA.

The protein resides in the cell junction. It localises to the tight junction. The protein localises to the lateral cell membrane. It is found in the apical cell membrane. This chain is Transmembrane protein 114, found in Mus musculus (Mouse).